Here is a 432-residue protein sequence, read N- to C-terminus: Adenylosuccinate synthetase (432 aa).

GTP contacts are provided by residues 13–19 (GDEGKGK) and 41–43 (GHT). Catalysis depends on D14, which acts as the Proton acceptor. The Mg(2+) site is built by D14 and G41. Residues 14–17 (DEGK), 39–42 (NAGH), T130, R144, Q225, T240, and R304 contribute to the IMP site. Residue H42 is the Proton donor of the active site. 300–306 (ATTGRRR) serves as a coordination point for substrate. GTP contacts are provided by residues R306, 332-334 (KLD), and 415-417 (STG).

Belongs to the adenylosuccinate synthetase family. In terms of assembly, homodimer. Mg(2+) serves as cofactor.

It is found in the cytoplasm. The catalysed reaction is IMP + L-aspartate + GTP = N(6)-(1,2-dicarboxyethyl)-AMP + GDP + phosphate + 2 H(+). Its pathway is purine metabolism; AMP biosynthesis via de novo pathway; AMP from IMP: step 1/2. Its function is as follows. Plays an important role in the de novo pathway of purine nucleotide biosynthesis. Catalyzes the first committed step in the biosynthesis of AMP from IMP. This Salmonella arizonae (strain ATCC BAA-731 / CDC346-86 / RSK2980) protein is Adenylosuccinate synthetase.